Consider the following 109-residue polypeptide: Small ribosomal subunit protein bS6 (109 aa).

It belongs to the bacterial ribosomal protein bS6 family.

In terms of biological role, binds together with bS18 to 16S ribosomal RNA. The chain is Small ribosomal subunit protein bS6 from Anaplasma marginale (strain St. Maries).